We begin with the raw amino-acid sequence, 283 residues long: Zinc finger protein 691 (283 aa).

Residues 1–41 (MGSEKEQRPEAHLPEEGEGAKPWRVDGSKDSQITPREDHGQ) show a composition bias toward basic and acidic residues. Residues 1-68 (MGSEKEQRPE…KVTAQAGGPG (68 aa)) form a disordered region. S43 carries the phosphoserine modification. A Glycyl lysine isopeptide (Lys-Gly) (interchain with G-Cter in SUMO2) cross-link involves residue K81. 7 C2H2-type zinc fingers span residues 83–105 (FICA…QRIH), 111–133 (YKCS…ERIH), 139–161 (YQCA…QQDH), 167–189 (YRCD…HRTH), 195–217 (YICC…HRTH), 223–245 (YECT…QRTH), and 251–273 (YRCT…QKTH).

Belongs to the krueppel C2H2-type zinc-finger protein family.

It localises to the nucleus. Its function is as follows. May be involved in transcriptional regulation. The sequence is that of Zinc finger protein 691 (Znf691) from Mus musculus (Mouse).